The sequence spans 519 residues: MNINFSDVLVLGGISVSFLLAYQAIYFYFIYSPRAKKLGCALPPVFFSFPLGIPEVIRLVNAWFNDDLLEYFTFKFEEFQRKTGFQSVAGQLWIGTIEPENIKTMLATSFKDYSLGFRYEAMYGLLGNGIFTLSGEGWKHSRALLRPQFSREQVSHLESMRTHINMLINNHFKGGKVVDAQVLFHNLTIDTATEFLFGESTNTLDPALAQHGFPGPKGLVTGEQFAEAFTSALELLSVRVMAGAAWFLVWTPKFWRSCKVCHNFIDYFVFKALATPMEKDQEADRYVFIRELTKETSDPRVIRDQALNILLAGRDTTAALLSFTTYYLGAYPEVYDELREAVIADFGKEDAEPPTFEQLKQCKVLQNVIREVLRLHPNVPLNFREAITDTKFPTGGGPNGDQPVFVPKGQKVFYATYVMQRNEGLWGPDSTTFRPDRWNESREAIASGWDYIPFNGGPRICLGQQFALTEASYTLVRICQEFSRIEVLHPDVITSRNVMKQRMRLTNSSSGGVIAKFIR.

A helical transmembrane segment spans residues 10–30 (VLGGISVSFLLAYQAIYFYFI). Cys461 serves as a coordination point for heme.

The protein belongs to the cytochrome P450 family. It depends on heme as a cofactor.

The protein resides in the membrane. It catalyses the reaction an omega-methyl-long-chain fatty acid + reduced [NADPH--hemoprotein reductase] + O2 = an omega-hydroxy-long-chain fatty acid + oxidized [NADPH--hemoprotein reductase] + H2O + H(+). The enzyme catalyses (9Z)-octadecenoate + reduced [NADPH--hemoprotein reductase] + O2 = 18-hydroxy-(9Z)-octadecenoate + oxidized [NADPH--hemoprotein reductase] + H2O + H(+). The catalysed reaction is hexadecanoate + reduced [NADPH--hemoprotein reductase] + O2 = 16-hydroxyhexadecanoate + oxidized [NADPH--hemoprotein reductase] + H2O + H(+). It carries out the reaction (9Z)-hexadecenoate + reduced [NADPH--hemoprotein reductase] + O2 = (9Z)-16-hydroxyhexadec-9-enoate + oxidized [NADPH--hemoprotein reductase] + H2O + H(+). Its function is as follows. Catalyzes the terminal (at the omega-position) hydroxylation of a fatty acid. Probably involved in alkane metabolism. Has minor activity toward myristic acid, palmitic acid, palmitoleic acid and oleic acid. This Starmerella bombicola (Yeast) protein is Cytochrome P450 52-E3.